Reading from the N-terminus, the 197-residue chain is HTH-type transcriptional regulator BetI (197 aa).

The HTH tetR-type domain maps to 8–68; sequence PIRRQQLIQA…ATMRHLMNAL (61 aa). Residues 31–50 constitute a DNA-binding region (H-T-H motif); the sequence is SIALIARLAGVSNGIISHYF.

The protein operates within amine and polyamine biosynthesis; betaine biosynthesis via choline pathway [regulation]. Functionally, repressor involved in the biosynthesis of the osmoprotectant glycine betaine. It represses transcription of the choline transporter BetT and the genes of BetAB involved in the synthesis of glycine betaine. This is HTH-type transcriptional regulator BetI from Pseudomonas savastanoi pv. phaseolicola (strain 1448A / Race 6) (Pseudomonas syringae pv. phaseolicola (strain 1448A / Race 6)).